Here is a 373-residue protein sequence, read N- to C-terminus: MSHNTFGHLFRVTTFGESHGPAIGCVVDGCPPLIPIDEADIQTFLDLRRPGTSRFTTQRQEADRVRILSGVFTDEASGKQVSTGTPIALLIENTDQRSKDYDAIKNLYRPGHADFAYDAKYGLRDHRGGGRSSARETATRVAAGAIARKVVADVTIRGALVQMGPHKINRDAWDWDETTRNPFFCPDAKAAAFFETYLDDIRKAGSSIGAVIEIVAENVPAGWGAPLYGKLDADLASGLMSINAVKGVEIGEGFDAAALSGEANADEMRIGSLGEPVFLSNHAGGILGGISTGQPLVMRFAVKPTSSILQPRHTIDRSGHESEIVTKGRHDPCVGIRAVPVGEAMVACVLADHFLRHRGQIGEGAVWPANRSR.

Arginine 48 and arginine 54 together coordinate NADP(+). FMN contacts are provided by residues 131-133 (RSS), 243-244 (NA), glycine 288, 303-307 (KPTSS), and arginine 329.

The protein belongs to the chorismate synthase family. Homotetramer. Requires FMNH2 as cofactor.

It catalyses the reaction 5-O-(1-carboxyvinyl)-3-phosphoshikimate = chorismate + phosphate. It functions in the pathway metabolic intermediate biosynthesis; chorismate biosynthesis; chorismate from D-erythrose 4-phosphate and phosphoenolpyruvate: step 7/7. Catalyzes the anti-1,4-elimination of the C-3 phosphate and the C-6 proR hydrogen from 5-enolpyruvylshikimate-3-phosphate (EPSP) to yield chorismate, which is the branch point compound that serves as the starting substrate for the three terminal pathways of aromatic amino acid biosynthesis. This reaction introduces a second double bond into the aromatic ring system. The sequence is that of Chorismate synthase from Beijerinckia indica subsp. indica (strain ATCC 9039 / DSM 1715 / NCIMB 8712).